The primary structure comprises 172 residues: Small ribosomal subunit protein uS5 (172 aa).

The S5 DRBM domain occupies 17-80 (MREKMIAVNR…EEARRKMIKV (64 aa)).

It belongs to the universal ribosomal protein uS5 family. In terms of assembly, part of the 30S ribosomal subunit. Contacts proteins S4 and S8.

With S4 and S12 plays an important role in translational accuracy. Functionally, located at the back of the 30S subunit body where it stabilizes the conformation of the head with respect to the body. This is Small ribosomal subunit protein uS5 from Herminiimonas arsenicoxydans.